A 398-amino-acid chain; its full sequence is Cytochrome P450 165B3 (398 aa).

C347 contributes to the heme binding site.

Belongs to the cytochrome P450 family. Heme serves as cofactor.

Its pathway is antibiotic biosynthesis; vancomycin biosynthesis. Its function is as follows. Involved in the coupling of aromatic side chains of the heptapeptide of vancomycin. This Amycolatopsis orientalis (Nocardia orientalis) protein is Cytochrome P450 165B3 (cyp165B3).